The following is a 68-amino-acid chain: Beta-defensin 1 (68 aa).

Positions 1 to 21 (MRTSYLLLFTLCLLLSEMASG) are cleaved as a signal peptide. The propeptide occupies 22 to 32 (DNFLTGLGHRS). Disulfide bonds link C37–C66, C44–C59, and C49–C67.

This sequence belongs to the beta-defensin family. Monomer. Homodimer.

The protein localises to the secreted. The protein resides in the membrane. Its function is as follows. Has bactericidal activity. May act as a ligand for C-C chemokine receptor CCR6. Positively regulates the sperm motility and bactericidal activity in a CCR6-dependent manner. Binds to CCR6 and triggers Ca2+ mobilization in the sperm which is important for its motility. This chain is Beta-defensin 1 (DEFB1), found in Macaca mulatta (Rhesus macaque).